Reading from the N-terminus, the 223-residue chain is uncharacterized protein (223 aa).

This sequence to M.jannaschii MJ0575.

This is an uncharacterized protein from Methanocaldococcus jannaschii (strain ATCC 43067 / DSM 2661 / JAL-1 / JCM 10045 / NBRC 100440) (Methanococcus jannaschii).